We begin with the raw amino-acid sequence, 318 residues long: MAPWAAAQLWALNPLRALWLTLAAAFLLTLLLQLVPPGLLPGCALFQDLIRYGKTKREGQSRPAVCRVFDVPKRYFSHFYIISALWNGFLLWHLTQSVFLGVPFPNWLHGLLRILGASQFQGGELALSAFLVLVFLWLHSLRRLFECFYVSVFSNTVIHIVQYCFGLVYYVLTGLTVLSQVPMDGRNAYVIGKNLLMQARWFHILGMLMFIWSSVHQYKCHVILGNLRKNKAGVVIHCNHRIPFGDWFEYVSSPNYLAELMIYISMAVTFGFHNLTWWLVVTYVFFSQALSAFLSHKFYKSKFVSYPKHRKAFLPFLF.

Residues 1–19 are Cytoplasmic-facing; that stretch reads MAPWAAAQLWALNPLRALW. Residues 20–40 traverse the membrane as a helical segment; sequence LTLAAAFLLTLLLQLVPPGLL. The Lumenal segment spans residues 41–80; sequence PGCALFQDLIRYGKTKREGQSRPAVCRVFDVPKRYFSHFY. A helical transmembrane segment spans residues 81–101; the sequence is IISALWNGFLLWHLTQSVFLG. The Cytoplasmic portion of the chain corresponds to 102-119; the sequence is VPFPNWLHGLLRILGASQ. A helical transmembrane segment spans residues 120 to 140; the sequence is FQGGELALSAFLVLVFLWLHS. Residues 141-156 lie on the Lumenal side of the membrane; that stretch reads LRRLFECFYVSVFSNT. Residues 157–177 traverse the membrane as a helical segment; sequence VIHIVQYCFGLVYYVLTGLTV. Residues 178 to 194 lie on the Cytoplasmic side of the membrane; it reads LSQVPMDGRNAYVIGKN. The chain crosses the membrane as a helical span at residues 195-215; it reads LLMQARWFHILGMLMFIWSSV. Residues 216–265 lie on the Lumenal side of the membrane; the sequence is HQYKCHVILGNLRKNKAGVVIHCNHRIPFGDWFEYVSSPNYLAELMIYIS. Residues 266–286 form a helical membrane-spanning segment; the sequence is MAVTFGFHNLTWWLVVTYVFF. At 287–318 the chain is on the cytoplasmic side; it reads SQALSAFLSHKFYKSKFVSYPKHRKAFLPFLF.

This sequence belongs to the steroid 5-alpha reductase family. Polyprenal reductase subfamily.

The protein resides in the endoplasmic reticulum membrane. It catalyses the reaction a di-trans,poly-cis-dolichal + NADP(+) = a di-trans,poly-cis-polyprenal + NADPH + H(+). It carries out the reaction a 3-oxo-5alpha-steroid + NADP(+) = a 3-oxo-Delta(4)-steroid + NADPH + H(+). The catalysed reaction is androst-4-ene-3,17-dione + NADPH + H(+) = 5alpha-androstan-3,17-dione + NADP(+). The enzyme catalyses 17beta-hydroxy-5alpha-androstan-3-one + NADP(+) = testosterone + NADPH + H(+). The protein operates within protein modification; protein glycosylation. In terms of biological role, plays a key role in early steps of protein N-linked glycosylation by being involved in the conversion of polyprenol into dolichol. Acts as a polyprenal reductase that mediates the reduction of polyprenal into dolichal in a NADP-dependent mechanism. Dolichols are required for the synthesis of dolichol-linked monosaccharides and the oligosaccharide precursor used for N-glycosylation. Also able to convert testosterone (T) into 5-alpha-dihydrotestosterone (DHT). The chain is Polyprenal reductase (SRD5A3) from Ailuropoda melanoleuca (Giant panda).